The sequence spans 211 residues: UPF0319 protein VC_A0026 (211 aa).

The N-terminal stretch at 1 to 21 (MKPMQRLTCLLALCFAASASA) is a signal peptide.

Belongs to the UPF0319 family.

The polypeptide is UPF0319 protein VC_A0026 (Vibrio cholerae serotype O1 (strain ATCC 39315 / El Tor Inaba N16961)).